A 576-amino-acid chain; its full sequence is Proline--tRNA ligase (576 aa).

The protein belongs to the class-II aminoacyl-tRNA synthetase family. ProS type 1 subfamily. In terms of assembly, homodimer.

It is found in the cytoplasm. The catalysed reaction is tRNA(Pro) + L-proline + ATP = L-prolyl-tRNA(Pro) + AMP + diphosphate. Catalyzes the attachment of proline to tRNA(Pro) in a two-step reaction: proline is first activated by ATP to form Pro-AMP and then transferred to the acceptor end of tRNA(Pro). As ProRS can inadvertently accommodate and process non-cognate amino acids such as alanine and cysteine, to avoid such errors it has two additional distinct editing activities against alanine. One activity is designated as 'pretransfer' editing and involves the tRNA(Pro)-independent hydrolysis of activated Ala-AMP. The other activity is designated 'posttransfer' editing and involves deacylation of mischarged Ala-tRNA(Pro). The misacylated Cys-tRNA(Pro) is not edited by ProRS. The sequence is that of Proline--tRNA ligase from Dechloromonas aromatica (strain RCB).